A 524-amino-acid chain; its full sequence is Peptide chain release factor 3 (524 aa).

The region spanning 10–278 (DSRRTFAIIS…TFLQFAPAPH (269 aa)) is the tr-type G domain. GTP-binding positions include 19 to 26 (SHPDAGKT), 87 to 91 (DTPGH), and 141 to 144 (NKLD).

The protein belongs to the TRAFAC class translation factor GTPase superfamily. Classic translation factor GTPase family. PrfC subfamily.

Its subcellular location is the cytoplasm. In terms of biological role, increases the formation of ribosomal termination complexes and stimulates activities of RF-1 and RF-2. It binds guanine nucleotides and has strong preference for UGA stop codons. It may interact directly with the ribosome. The stimulation of RF-1 and RF-2 is significantly reduced by GTP and GDP, but not by GMP. In Enterococcus faecalis (strain ATCC 700802 / V583), this protein is Peptide chain release factor 3.